The following is a 635-amino-acid chain: Phosphomethylpyrimidine synthase (635 aa).

Residues 1–14 (MNATVSSAVQSSLP) show a composition bias toward polar residues. The interval 1 to 41 (MNATVSSAVQSSLPFSGKTAQVDEGTVKPLPRSQKTYLSGS) is disordered. Residues N240, M269, Y298, H334, 354–356 (SRG), 395–398 (DGLR), and E434 contribute to the substrate site. H438 is a Zn(2+) binding site. Substrate is bound at residue Y461. H502 lines the Zn(2+) pocket. The [4Fe-4S] cluster site is built by C582, C585, and C590.

Belongs to the ThiC family. As to quaternary structure, homodimer. It depends on [4Fe-4S] cluster as a cofactor.

The enzyme catalyses 5-amino-1-(5-phospho-beta-D-ribosyl)imidazole + S-adenosyl-L-methionine = 4-amino-2-methyl-5-(phosphooxymethyl)pyrimidine + CO + 5'-deoxyadenosine + formate + L-methionine + 3 H(+). Its pathway is cofactor biosynthesis; thiamine diphosphate biosynthesis. In terms of biological role, catalyzes the synthesis of the hydroxymethylpyrimidine phosphate (HMP-P) moiety of thiamine from aminoimidazole ribotide (AIR) in a radical S-adenosyl-L-methionine (SAM)-dependent reaction. In Nitrosospira multiformis (strain ATCC 25196 / NCIMB 11849 / C 71), this protein is Phosphomethylpyrimidine synthase.